The primary structure comprises 436 residues: Origin recognition complex subunit 4 (436 aa).

K7 is modified (N6-methyllysine). Position 67 to 74 (67 to 74) interacts with ATP; the sequence is GPRGSGKT.

Belongs to the ORC4 family. In terms of assembly, component of ORC, a complex composed of at least 6 subunits: ORC1, ORC2, ORC3, ORC4, ORC5 and ORC6. ORC is regulated in a cell-cycle dependent manner. It is sequentially assembled at the exit from anaphase of mitosis and disassembled as cells enter S phase. Interacts with DBF4. Interacts with POLQ.

The protein resides in the nucleus. Functionally, component of the origin recognition complex (ORC) that binds origins of replication. DNA-binding is ATP-dependent. The specific DNA sequences that define origins of replication have not been identified yet. ORC is required to assemble the pre-replication complex necessary to initiate DNA replication. Binds histone H3 and H4 trimethylation marks H3K9me3, H3K27me3 and H4K20me3. In Homo sapiens (Human), this protein is Origin recognition complex subunit 4 (ORC4).